Consider the following 2310-residue polypeptide: Retinal-specific phospholipid-transporting ATPase ABCA4 (2310 aa).

Topologically, residues 1–21 (MGFLRQIQLLLWKNWTLRKRQ) are cytoplasmic. Residues 22–42 (KIRFVVELVWPLSLFLVLIWL) form a helical membrane-spanning segment. At 43–646 (RNANPLYSQH…MPYPCFVDDS (604 aa)) the chain is on the extracellular side. Intrachain disulfides connect C54/C81 and C75/C324. N98 carries an N-linked (GlcNAc...) asparagine glycan. Residues S336 and N338 each coordinate Mg(2+). C370 and C519 are oxidised to a cystine. N-linked (GlcNAc...) asparagine glycans are attached at residues N415 and N504. An N-all-trans-retinylidenephosphatidylethanolamine-binding residues include R587 and R653. Cystine bridges form between C641–C1489, C1443–C1454, and C1487–C1501. A helical membrane pass occupies residues 647-667 (FMIILNRCFPIFMVLAWIYSV). Topologically, residues 668–699 (SMTVKGIVLEKELRLKETLKNQGVSNAVIWCT) are cytoplasmic. The helical transmembrane segment at 700–720 (WFLDSFSIMALSIFLLTLFIM) threads the bilayer. Topologically, residues 721–730 (HGRILHYSDP) are extracellular. A helical membrane pass occupies residues 731–751 (FILFLFLLAFATATIMQSFLL). Residues 752-759 (STLFSKAS) are Cytoplasmic-facing. Residues 760-780 (LAAACSGVIYFTLYLPHVLCF) traverse the membrane as a helical segment. The Extracellular portion of the chain corresponds to 781-835 (AWQDRMTADLKTTVSLLSSVAFGFGTEYLVRFEEQGLGLQWSNIGKSPLEGDEFS). A helical transmembrane segment spans residues 836 to 856 (FLLSMKMMLLDAALYGLLAWY). The Cytoplasmic segment spans residues 857–1375 (LDQVFPGDYG…IRSRKDFVAQ (519 aa)). The disordered stretch occupies residues 891-910 (ERALEKTEPLTEEMEDPEHP). Position 901 is a phosphothreonine (T901). Positions 929–1160 (VCVKNLVKVF…FGTGFYLTLV (232 aa)) constitute an ABC transporter 1 domain. ATP contacts are provided by F938, G966, and K969. T970 contacts Mg(2+). Residues T971, Q1010, K1054, G1064, G1065, and H1118 each coordinate ATP. Position 1185 is a phosphoserine (S1185). The tract at residues 1311–1344 (RQYAQAPHTCSPGQVDPPKGQPSPEPEDPGVPFN) is disordered. Residues 1376–1396 (IVLPATFVFLALMLSIIVPPF) traverse the membrane as a helical segment. At 1397–1726 (GEFPALTLHP…VSPTTYWLTN (330 aa)) the chain is on the extracellular side. An N-linked (GlcNAc...) asparagine glycan is attached at N1468. N1528, N1587, and N1661 each carry an N-linked (GlcNAc...) asparagine glycan. Residues 1727–1747 (FLWDIMNYAVSAGLVVGIFIG) traverse the membrane as a helical segment. Residues 1748–1758 (FQKKAYTSPDN) lie on the Cytoplasmic side of the membrane. A helical membrane pass occupies residues 1759–1779 (LPALVSLLMLYGWAVIPMMYP). Residues 1780-1791 (ASFLFEVPSTAY) lie on the Extracellular side of the membrane. Residues 1792 to 1812 (VALSCANLFIGINSSAITFVL) traverse the membrane as a helical segment. The Cytoplasmic portion of the chain corresponds to 1813 to 1830 (ELFENNRTLLRFNAMLRK). The chain crosses the membrane as a helical span at residues 1831–1851 (LLIVFPHFCLGRGLIDLALSQ). Residues 1852–1872 (AVTDVYAQFGEEYSANPFQWD) are Extracellular-facing. A helical membrane pass occupies residues 1873-1893 (LIGKNLVAMAIEGVVYFLLTL). Residues 1894 to 2310 (LIQHHFFLTR…AEDKHTRSPQ (417 aa)) are Cytoplasmic-facing. Residues 1937-2169 (LKLNELTKVY…FGDGYIVTMK (233 aa)) form the ABC transporter 2 domain. ATP contacts are provided by N1973, G1974, K1977, T1978, T1979, and G2072. T1978 contacts Mg(2+). The essential for ATP binding and ATPase activity stretch occupies residues 2243 to 2248 (VFVNFA). The interval 2266–2310 (ASWQAKLEEKSGRLQTQEPLPAGSEQLANGSNPTAAEDKHTRSPQ) is disordered. A compositionally biased stretch (basic and acidic residues) spans 2301–2310 (AEDKHTRSPQ).

Belongs to the ABC transporter superfamily. ABCA family. Post-translationally, N-glycosylated. Proteolytic cleavage by trypsin leads to a 120-kDa N-terminal fragment and a 115-kDa C-terminal fragment that are linked through disulfide bonds. In terms of processing, phosphorylation is independent of light exposure and modulates ATPase activity. Retinal-specific. Seems to be exclusively found in the rims of rod photoreceptor cells.

Its subcellular location is the membrane. It localises to the endoplasmic reticulum. The protein localises to the cell projection. The protein resides in the cilium. It is found in the photoreceptor outer segment. It catalyses the reaction an N-all-trans-retinylidenephosphatidylethanolamine(out) + ATP + H2O = an N-all-trans-retinylidenephosphatidylethanolamine(in) + ADP + phosphate + H(+). It carries out the reaction ATP + H2O + phospholipidSide 1 = ADP + phosphate + phospholipidSide 2.. The catalysed reaction is a 1,2-diacyl-sn-glycero-3-phosphoethanolamine(out) + ATP + H2O = a 1,2-diacyl-sn-glycero-3-phosphoethanolamine(in) + ADP + phosphate + H(+). The enzyme catalyses N-11-cis-retinylidenephosphatidylethanolamine(out) + ATP + H2O = N-11-cis-retinylidenephosphatidylethanolamine(in) + ADP + phosphate + H(+). It catalyses the reaction ATP + H2O = ADP + phosphate + H(+). With respect to regulation, ATPase activity is decreased by cholesterol and ceramide. Phospholipids translocase activity is highly reduced by berylium fluoride and aluminum floride. N-ethylmaleimide inhibits phospholipid translocase activity. In terms of biological role, flippase that catalyzes in an ATP-dependent manner the transport of retinal-phosphatidylethanolamine conjugates like the 11-cis and all-trans isomers of N-retinylidene-phosphatidylethanolamine from the lumen to the cytoplasmic leaflet of photoreceptor outer segment disk membranes, where N-cis-retinylidene-phosphatidylethanolamine (N-cis-R-PE) is then isomerized to its all-trans isomer (N-trans-R-PE) and reduced by RDH8 to produce all-trans-retinol (all-trans-rol) and therefore prevents the accumulation of excess of 11-cis-retinal and its schiff-base conjugate and the formation of toxic bisretinoid. Displays ATPase activity in vitro in absence of retinal substrate. May display GTPase activity that is strongly influenced by the lipid environment and the presence of retinoid compounds. Binds the unprotonated form of N-retinylidene-phosphatidylethanolamine with high affinity in the absence of ATP and ATP binding and hydrolysis induce a protein conformational change that causes the dissociation of N-retinylidene-phosphatidylethanolamine. The polypeptide is Retinal-specific phospholipid-transporting ATPase ABCA4 (Mus musculus (Mouse)).